The sequence spans 283 residues: ATP phosphoribosyltransferase (283 aa).

Belongs to the ATP phosphoribosyltransferase family. Long subfamily. Mg(2+) serves as cofactor.

It is found in the cytoplasm. The catalysed reaction is 1-(5-phospho-beta-D-ribosyl)-ATP + diphosphate = 5-phospho-alpha-D-ribose 1-diphosphate + ATP. The protein operates within amino-acid biosynthesis; L-histidine biosynthesis; L-histidine from 5-phospho-alpha-D-ribose 1-diphosphate: step 1/9. With respect to regulation, feedback inhibited by histidine. In terms of biological role, catalyzes the condensation of ATP and 5-phosphoribose 1-diphosphate to form N'-(5'-phosphoribosyl)-ATP (PR-ATP). Has a crucial role in the pathway because the rate of histidine biosynthesis seems to be controlled primarily by regulation of HisG enzymatic activity. The sequence is that of ATP phosphoribosyltransferase from Salinibacter ruber (strain DSM 13855 / M31).